A 372-amino-acid chain; its full sequence is Aminomethyltransferase (372 aa).

The protein belongs to the GcvT family. In terms of assembly, the glycine cleavage system is composed of four proteins: P, T, L and H.

The enzyme catalyses N(6)-[(R)-S(8)-aminomethyldihydrolipoyl]-L-lysyl-[protein] + (6S)-5,6,7,8-tetrahydrofolate = N(6)-[(R)-dihydrolipoyl]-L-lysyl-[protein] + (6R)-5,10-methylene-5,6,7,8-tetrahydrofolate + NH4(+). Functionally, the glycine cleavage system catalyzes the degradation of glycine. The polypeptide is Aminomethyltransferase (Prochlorococcus marinus (strain NATL1A)).